The chain runs to 861 residues: ToMV susceptible protein tm-2 (861 aa).

Residues 63–83 (VKNLLKDIQELAGDVEDLLDD) adopt a coiled-coil conformation. Positions 162-388 (DDFNMLQAKL…LESMGHKVQD (227 aa)) constitute an NB-ARC domain. 185-192 (GMPGLGKT) contacts ATP. 12 LRR repeats span residues 225 to 248 (LDIA…NLRS), 305 to 327 (LHAL…IFNF), 388 to 411 (DGCA…CFLY), 449 to 472 (LAED…TYNG), 510 to 536 (VARL…KLEK), 585 to 608 (MTCL…IVKL), 609 to 631 (TRLE…VWES), 652 to 680 (ISSF…FFEP), 689 to 713 (LRKL…PVPK), 735 to 758 (YPKI…AFPP), 781 to 804 (LPKL…LSGE), and 810 to 835 (FPQL…DVSM).

The protein belongs to the disease resistance NB-LRR family. As to quaternary structure, (Microbial infection) Fails to interact with the tobamovirus mouvement protein of tobacco mosaic virus (TMV).

Its subcellular location is the cell membrane. Potential inhibitor of viral mouvements which may confer resistance to some tobamoviruses but not to the tomato mosaic virus (ToMV) and tobacco mosaic virus (TMV). In Solanum lycopersicum (Tomato), this protein is ToMV susceptible protein tm-2.